We begin with the raw amino-acid sequence, 350 residues long: Phenylalanine--tRNA ligase alpha subunit (350 aa).

Glu-257 contacts Mg(2+).

The protein belongs to the class-II aminoacyl-tRNA synthetase family. Phe-tRNA synthetase alpha subunit type 1 subfamily. In terms of assembly, tetramer of two alpha and two beta subunits. Requires Mg(2+) as cofactor.

The protein localises to the cytoplasm. It carries out the reaction tRNA(Phe) + L-phenylalanine + ATP = L-phenylalanyl-tRNA(Phe) + AMP + diphosphate + H(+). This chain is Phenylalanine--tRNA ligase alpha subunit, found in Listeria monocytogenes serotype 4a (strain HCC23).